Here is a 393-residue protein sequence, read N- to C-terminus: Protein TsgA homolog (393 aa).

12 consecutive transmembrane segments (helical) span residues 11-31 (WISF…GMVM), 51-71 (FLNA…EIIP), 78-98 (FGFV…SLAL), 101-121 (AAMF…TFLI), 134-154 (LLFT…VAAY), 162-182 (WYWV…LTFG), 206-226 (IGVL…LGFI), 245-265 (TLVS…SFIL), 273-293 (ILTV…KAQP), 297-317 (AWFI…IITL), 332-352 (FVLT…GPIV), and 361-381 (LLTA…LGFV).

It belongs to the major facilitator superfamily. TsgA family.

The protein resides in the cell inner membrane. The polypeptide is Protein TsgA homolog (Citrobacter koseri (strain ATCC BAA-895 / CDC 4225-83 / SGSC4696)).